The primary structure comprises 101 residues: UPF0235 protein Mevan_0378 (101 aa).

It belongs to the UPF0235 family.

This Methanococcus vannielii (strain ATCC 35089 / DSM 1224 / JCM 13029 / OCM 148 / SB) protein is UPF0235 protein Mevan_0378.